The sequence spans 170 residues: Crossover junction endodeoxyribonuclease RuvC (170 aa).

Catalysis depends on residues aspartate 9, glutamate 70, and aspartate 145. Aspartate 9, glutamate 70, and aspartate 145 together coordinate Mg(2+).

This sequence belongs to the RuvC family. In terms of assembly, homodimer which binds Holliday junction (HJ) DNA. The HJ becomes 2-fold symmetrical on binding to RuvC with unstacked arms; it has a different conformation from HJ DNA in complex with RuvA. In the full resolvosome a probable DNA-RuvA(4)-RuvB(12)-RuvC(2) complex forms which resolves the HJ. Requires Mg(2+) as cofactor.

Its subcellular location is the cytoplasm. It catalyses the reaction Endonucleolytic cleavage at a junction such as a reciprocal single-stranded crossover between two homologous DNA duplexes (Holliday junction).. The RuvA-RuvB-RuvC complex processes Holliday junction (HJ) DNA during genetic recombination and DNA repair. Endonuclease that resolves HJ intermediates. Cleaves cruciform DNA by making single-stranded nicks across the HJ at symmetrical positions within the homologous arms, yielding a 5'-phosphate and a 3'-hydroxyl group; requires a central core of homology in the junction. The consensus cleavage sequence is 5'-(A/T)TT(C/G)-3'. Cleavage occurs on the 3'-side of the TT dinucleotide at the point of strand exchange. HJ branch migration catalyzed by RuvA-RuvB allows RuvC to scan DNA until it finds its consensus sequence, where it cleaves and resolves the cruciform DNA. This is Crossover junction endodeoxyribonuclease RuvC from Chlamydia trachomatis serovar A (strain ATCC VR-571B / DSM 19440 / HAR-13).